The sequence spans 35 residues: Small toxic polypeptide LdrA (35 aa).

A helical transmembrane segment spans residues 8–28; it reads MIFWHDLAAPILAGIITAAIV.

It belongs to the Ldr toxic peptide family.

It localises to the cell inner membrane. In terms of biological role, toxic component of a type I toxin-antitoxin (TA) system. Inhibits ATP synthesis possibly due to its insertion in the cell inner membrane, ATP levels drop over 50% 2 minutes after induction. Overexpression is toxic leading to cell death, it inhibits cell growth within 30 minutes; C-terminally tagged versions of the protein are toxic while N-terminally tagged versions are not. The chain is Small toxic polypeptide LdrA (ldrA) from Escherichia coli (strain K12).